Reading from the N-terminus, the 388-residue chain is Isocitrate dehydrogenase [NAD] subunit 1, mitochondrial (388 aa).

The transit peptide at 1–35 (MFSLRTAQPAQSLFRAATNTYSTSLPRSAIAARSF) directs the protein to the mitochondrion. 3 residues coordinate substrate: R137, R168, and D255. A Mg(2+)-binding site is contributed by D255.

Belongs to the isocitrate and isopropylmalate dehydrogenases family. In terms of assembly, octamer of two non-identical subunits IDH1 and IDH2. Mg(2+) is required as a cofactor. It depends on Mn(2+) as a cofactor.

The protein resides in the mitochondrion. The enzyme catalyses D-threo-isocitrate + NAD(+) = 2-oxoglutarate + CO2 + NADH. Functionally, performs an essential role in the oxidative function of the citric acid cycle. The protein is Isocitrate dehydrogenase [NAD] subunit 1, mitochondrial (IDH1) of Ajellomyces capsulatus (Darling's disease fungus).